We begin with the raw amino-acid sequence, 208 residues long: Crossover junction endodeoxyribonuclease RuvC (208 aa).

Active-site residues include Asp-9, Glu-70, and Asp-143. Mg(2+) contacts are provided by Asp-9, Glu-70, and Asp-143.

The protein belongs to the RuvC family. As to quaternary structure, homodimer which binds Holliday junction (HJ) DNA. The HJ becomes 2-fold symmetrical on binding to RuvC with unstacked arms; it has a different conformation from HJ DNA in complex with RuvA. In the full resolvosome a probable DNA-RuvA(4)-RuvB(12)-RuvC(2) complex forms which resolves the HJ. Mg(2+) is required as a cofactor.

It localises to the cytoplasm. It carries out the reaction Endonucleolytic cleavage at a junction such as a reciprocal single-stranded crossover between two homologous DNA duplexes (Holliday junction).. Its function is as follows. The RuvA-RuvB-RuvC complex processes Holliday junction (HJ) DNA during genetic recombination and DNA repair. Endonuclease that resolves HJ intermediates. Cleaves cruciform DNA by making single-stranded nicks across the HJ at symmetrical positions within the homologous arms, yielding a 5'-phosphate and a 3'-hydroxyl group; requires a central core of homology in the junction. The consensus cleavage sequence is 5'-(A/T)TT(C/G)-3'. Cleavage occurs on the 3'-side of the TT dinucleotide at the point of strand exchange. HJ branch migration catalyzed by RuvA-RuvB allows RuvC to scan DNA until it finds its consensus sequence, where it cleaves and resolves the cruciform DNA. This Leifsonia xyli subsp. xyli (strain CTCB07) protein is Crossover junction endodeoxyribonuclease RuvC.